The primary structure comprises 671 residues: DNA ligase (671 aa).

Residues 32-36, 81-82, and glutamate 113 each bind NAD(+); these read DAEYD and SL. Lysine 115 serves as the catalytic N6-AMP-lysine intermediate. The NAD(+) site is built by arginine 136, glutamate 173, lysine 290, and lysine 314. Residues cysteine 408, cysteine 411, cysteine 426, and cysteine 432 each coordinate Zn(2+). In terms of domain architecture, BRCT spans 593–671; that stretch reads EIDSPFAGKT…EAEMLRLLGS (79 aa).

This sequence belongs to the NAD-dependent DNA ligase family. LigA subfamily. It depends on Mg(2+) as a cofactor. The cofactor is Mn(2+).

It catalyses the reaction NAD(+) + (deoxyribonucleotide)n-3'-hydroxyl + 5'-phospho-(deoxyribonucleotide)m = (deoxyribonucleotide)n+m + AMP + beta-nicotinamide D-nucleotide.. DNA ligase that catalyzes the formation of phosphodiester linkages between 5'-phosphoryl and 3'-hydroxyl groups in double-stranded DNA using NAD as a coenzyme and as the energy source for the reaction. It is essential for DNA replication and repair of damaged DNA. This is DNA ligase from Escherichia coli (strain ATCC 8739 / DSM 1576 / NBRC 3972 / NCIMB 8545 / WDCM 00012 / Crooks).